Consider the following 142-residue polypeptide: Large ribosomal subunit protein uL13 (142 aa).

Belongs to the universal ribosomal protein uL13 family. Part of the 50S ribosomal subunit.

This protein is one of the early assembly proteins of the 50S ribosomal subunit, although it is not seen to bind rRNA by itself. It is important during the early stages of 50S assembly. The polypeptide is Large ribosomal subunit protein uL13 (Pasteurella multocida (strain Pm70)).